The sequence spans 232 residues: Thiamine import ATP-binding protein ThiQ (232 aa).

The ABC transporter domain occupies 2-230; sequence LKLTDITWLY…KASASAILGI (229 aa). 32-39 contacts ATP; it reads GPSGAGKS.

It belongs to the ABC transporter superfamily. Thiamine importer (TC 3.A.1.19.1) family. The complex is composed of two ATP-binding proteins (ThiQ), two transmembrane proteins (ThiP) and a solute-binding protein (ThiB).

It localises to the cell inner membrane. It catalyses the reaction thiamine(out) + ATP + H2O = thiamine(in) + ADP + phosphate + H(+). Functionally, part of the ABC transporter complex ThiBPQ involved in thiamine import. Responsible for energy coupling to the transport system. The protein is Thiamine import ATP-binding protein ThiQ of Shigella boydii serotype 4 (strain Sb227).